A 162-amino-acid polypeptide reads, in one-letter code: Endoribonuclease YbeY (162 aa).

Residues histidine 126, histidine 130, and histidine 136 each contribute to the Zn(2+) site.

It belongs to the endoribonuclease YbeY family. Zn(2+) serves as cofactor.

The protein localises to the cytoplasm. Functionally, single strand-specific metallo-endoribonuclease involved in late-stage 70S ribosome quality control and in maturation of the 3' terminus of the 16S rRNA. The protein is Endoribonuclease YbeY of Fusobacterium nucleatum subsp. nucleatum (strain ATCC 25586 / DSM 15643 / BCRC 10681 / CIP 101130 / JCM 8532 / KCTC 2640 / LMG 13131 / VPI 4355).